The sequence spans 449 residues: UDP-N-acetylglucosamine 1-carboxyvinyltransferase (449 aa).

Basic and acidic residues predominate over residues 1-12; the sequence is MQVTVNEHDAVE. The tract at residues 1-30 is disordered; the sequence is MQVTVNEHDAVERVATATPAGNREAHAHGT. 51–52 provides a ligand contact to phosphoenolpyruvate; the sequence is KN. Arginine 121 lines the UDP-N-acetyl-alpha-D-glucosamine pocket. The Proton donor role is filled by cysteine 145. Residue cysteine 145 is modified to 2-(S-cysteinyl)pyruvic acid O-phosphothioketal. UDP-N-acetyl-alpha-D-glucosamine-binding positions include 150–154, aspartate 333, and isoleucine 355; that span reads RPVDQ.

It belongs to the EPSP synthase family. MurA subfamily.

Its subcellular location is the cytoplasm. It carries out the reaction phosphoenolpyruvate + UDP-N-acetyl-alpha-D-glucosamine = UDP-N-acetyl-3-O-(1-carboxyvinyl)-alpha-D-glucosamine + phosphate. Its pathway is cell wall biogenesis; peptidoglycan biosynthesis. Cell wall formation. Adds enolpyruvyl to UDP-N-acetylglucosamine. The polypeptide is UDP-N-acetylglucosamine 1-carboxyvinyltransferase (Burkholderia pseudomallei (strain 1710b)).